A 244-amino-acid polypeptide reads, in one-letter code: Phosphoadenosine 5'-phosphosulfate reductase (244 aa).

The Nucleophile; cysteine thiosulfonate intermediate role is filled by Cys-239.

This sequence belongs to the PAPS reductase family. CysH subfamily.

The protein resides in the cytoplasm. The catalysed reaction is [thioredoxin]-disulfide + sulfite + adenosine 3',5'-bisphosphate + 2 H(+) = [thioredoxin]-dithiol + 3'-phosphoadenylyl sulfate. Its pathway is sulfur metabolism; hydrogen sulfide biosynthesis; sulfite from sulfate: step 3/3. Functionally, catalyzes the formation of sulfite from phosphoadenosine 5'-phosphosulfate (PAPS) using thioredoxin as an electron donor. This chain is Phosphoadenosine 5'-phosphosulfate reductase, found in Salmonella schwarzengrund (strain CVM19633).